The following is a 426-amino-acid chain: MKKPIHKVLYVQVIVAIIIGIGLGHFYPDLAVDMKPLGDGFIKLIKMVIGPIIFCTVVTGIAGMEDMKKVGRVGGKALLYFEIVSTFALVLGLIATHVLKPGVGFNIDPATLDGKAVASYAAKAHGQTTVDFLMHIIPDTLVSAFAQGEILQILLIALLFGAVLATAGEKGKVVTGFIDGLSHVLFGIVRIITKLAPIGAFGAMAFTIGKYGIGSLLPMLKLIGTFYLTSVVFVVVVLGIIARAVGFNILRFVAYIKEEMLIVLGTSSSEAALPQLMLKLERLGCSRSVVGLVVPTGYSFNLDGTNIYMTMAVLFIAQATNTDLTWTQQLTLLAVTMLTSKGASGVTGAGFITLAATLAVVPTIPLSGMVLILGIDRFMSECRALTNIVGNGVATVVVSAWEKELDRSKLNAALRGDVAIKEPAGV.

The next 8 membrane-spanning stretches (helical) occupy residues 8–28 (VLYV…HFYP), 44–64 (LIKM…IAGM), 78–98 (LLYF…ATHV), 148–168 (GEIL…ATAG), 173–193 (VVTG…RIIT), 222–242 (LIGT…GIIA), 297–317 (GYSF…LFIA), and 355–375 (AATL…ILGI).

It belongs to the dicarboxylate/amino acid:cation symporter (DAACS) (TC 2.A.23) family.

The protein localises to the cell inner membrane. In terms of biological role, responsible for the transport of dicarboxylates such as succinate, fumarate, and malate from the periplasm across the membrane. The protein is C4-dicarboxylate transport protein of Paraburkholderia xenovorans (strain LB400).